Reading from the N-terminus, the 314-residue chain is Porphobilinogen deaminase (314 aa).

Position 249 is an S-(dipyrrolylmethanemethyl)cysteine (Cys249).

The protein belongs to the HMBS family. As to quaternary structure, monomer. Dipyrromethane is required as a cofactor.

The catalysed reaction is 4 porphobilinogen + H2O = hydroxymethylbilane + 4 NH4(+). It participates in porphyrin-containing compound metabolism; protoporphyrin-IX biosynthesis; coproporphyrinogen-III from 5-aminolevulinate: step 2/4. In terms of biological role, tetrapolymerization of the monopyrrole PBG into the hydroxymethylbilane pre-uroporphyrinogen in several discrete steps. The chain is Porphobilinogen deaminase from Brucella abortus (strain S19).